Consider the following 432-residue polypeptide: Adenylosuccinate synthetase (432 aa).

GTP-binding positions include 11–17 (GDEGKGK) and 39–41 (GHT). The active-site Proton acceptor is the Asp-12. Mg(2+) is bound by residues Asp-12 and Gly-39. Residues 12–15 (DEGK), 37–40 (NAGH), Thr-134, Arg-148, Asn-230, Thr-245, and Arg-309 contribute to the IMP site. His-40 (proton donor) is an active-site residue. Position 305-311 (305-311 (VTTGRKR)) interacts with substrate. Residues Arg-311, 337 to 339 (KLD), and 419 to 421 (GTG) each bind GTP.

This sequence belongs to the adenylosuccinate synthetase family. In terms of assembly, homodimer. The cofactor is Mg(2+).

The protein resides in the cytoplasm. The catalysed reaction is IMP + L-aspartate + GTP = N(6)-(1,2-dicarboxyethyl)-AMP + GDP + phosphate + 2 H(+). It participates in purine metabolism; AMP biosynthesis via de novo pathway; AMP from IMP: step 1/2. Its function is as follows. Plays an important role in the de novo pathway and in the salvage pathway of purine nucleotide biosynthesis. Catalyzes the first committed step in the biosynthesis of AMP from IMP. This Kluyveromyces lactis (strain ATCC 8585 / CBS 2359 / DSM 70799 / NBRC 1267 / NRRL Y-1140 / WM37) (Yeast) protein is Adenylosuccinate synthetase.